A 396-amino-acid chain; its full sequence is NADH-quinone oxidoreductase subunit D (396 aa).

This sequence belongs to the complex I 49 kDa subunit family. As to quaternary structure, NDH-1 is composed of 14 different subunits. Subunits NuoB, C, D, E, F, and G constitute the peripheral sector of the complex.

It localises to the cell inner membrane. It carries out the reaction a quinone + NADH + 5 H(+)(in) = a quinol + NAD(+) + 4 H(+)(out). Its function is as follows. NDH-1 shuttles electrons from NADH, via FMN and iron-sulfur (Fe-S) centers, to quinones in the respiratory chain. The immediate electron acceptor for the enzyme in this species is believed to be ubiquinone. Couples the redox reaction to proton translocation (for every two electrons transferred, four hydrogen ions are translocated across the cytoplasmic membrane), and thus conserves the redox energy in a proton gradient. The chain is NADH-quinone oxidoreductase subunit D from Methylobacterium radiotolerans (strain ATCC 27329 / DSM 1819 / JCM 2831 / NBRC 15690 / NCIMB 10815 / 0-1).